The following is a 394-amino-acid chain: tRNA-specific adenosine deaminase 1 (394 aa).

One can recognise an A to I editase domain in the interval 54–388; that stretch reads SLGCGTKCIG…TKKPHELLDF (335 aa). His78 contacts Zn(2+). Glu80 (proton donor) is an active-site residue. 1D-myo-inositol hexakisphosphate is bound by residues Arg84 and Arg85. Cys127 and Cys191 together coordinate Zn(2+). The 1D-myo-inositol hexakisphosphate site is built by Lys194, Arg197, Lys320, Lys357, and Lys381.

Belongs to the ADAT1 family. It depends on 1D-myo-inositol hexakisphosphate as a cofactor. In terms of tissue distribution, widely expressed in early embryos, and later concentrates in the central nervous system.

The enzyme catalyses adenosine(37) in tRNA(Ala) + H2O + H(+) = inosine(37) in tRNA(Ala) + NH4(+). Functionally, specifically deaminates adenosine-37 to inosine in tRNA-Ala. This chain is tRNA-specific adenosine deaminase 1, found in Drosophila melanogaster (Fruit fly).